The sequence spans 69 residues: DNA-directed RNA polymerase subunit omega (69 aa).

This sequence belongs to the RNA polymerase subunit omega family. In terms of assembly, the RNAP catalytic core consists of 2 alpha, 1 beta, 1 beta' and 1 omega subunit. When a sigma factor is associated with the core the holoenzyme is formed, which can initiate transcription.

The enzyme catalyses RNA(n) + a ribonucleoside 5'-triphosphate = RNA(n+1) + diphosphate. Functionally, promotes RNA polymerase assembly. Latches the N- and C-terminal regions of the beta' subunit thereby facilitating its interaction with the beta and alpha subunits. In Pelotomaculum thermopropionicum (strain DSM 13744 / JCM 10971 / SI), this protein is DNA-directed RNA polymerase subunit omega.